Consider the following 383-residue polypeptide: La protein homolog (383 aa).

Positions 1-43 are disordered; that stretch reads MTEVEAKATATEETTKEEEEAPETTAEQTEESAQETSENVSKL. Over residues 15–33 the composition is skewed to acidic residues; the sequence is TKEEEEAPETTAEQTEESA. Positions 37 to 129 constitute an HTH La-type RNA-binding domain; sequence SENVSKLEAS…RRHPERPLPE (93 aa). In terms of domain architecture, RRM spans 141–228; sequence RTVYVKGFAP…RKMQDDYFEE (88 aa). One can recognise a xRRM domain in the interval 249-368; sequence HLPKGASVHL…RTPEGRQASR (120 aa). The segment at 343–383 is disordered; the sequence is KDQQARRQASNARNKGRTPEGRQASRPPQEWRRKAKGGRGE.

The protein localises to the nucleus. The protein resides in the cytoplasm. In terms of biological role, may be involved in transcription termination by RNA polymerase III. Binds RNA and DNA. Binds to the 3' end of the minus strand of Sindbis virus RNA. This may be significant for Sindbis virus RNA replication. The polypeptide is La protein homolog (Aedes albopictus (Asian tiger mosquito)).